The primary structure comprises 575 residues: Estrogen receptor beta (575 aa).

Residues 1–160 (MSSSLSPTLQ…GAVVKRDMHF (160 aa)) are modulating. Positions 108–151 (DTKPHTSGRHSSFLSRPKLFGKRPEDGDGDEALDDDDPSSSSSG) are disordered. Residues 134-145 (GDGDEALDDDDP) show a composition bias toward acidic residues. 2 NR C4-type zinc fingers span residues 161–181 (CVVC…CEGC) and 197–221 (CPAT…LRKC). The segment at residues 161 to 226 (CVVCHDYASG…RLRKCYEMGM (66 aa)) is a DNA-binding region (nuclear receptor). The NR LBD domain maps to 290-526 (SPEQLVYCIL…DLLLEMLDAN (237 aa)). A compositionally biased stretch (polar residues) spans 537-549 (VCTDPVTPATSPN). The segment at 537–557 (VCTDPVTPATSPNTPLPPQLH) is disordered.

It belongs to the nuclear hormone receptor family. NR3 subfamily. Binds DNA as a homodimer. Can form a heterodimer with ER-alpha. In terms of tissue distribution, ovary and testis.

The protein localises to the nucleus. Functionally, binds estrogens with an affinity similar to that of ER-alpha, and activates expression of reporter genes containing estrogen response elements (ERE) in an estrogen-dependent manner. The chain is Estrogen receptor beta (esr2) from Ictalurus punctatus (Channel catfish).